The primary structure comprises 538 residues: Atos homolog protein B (538 aa).

Composition is skewed to polar residues over residues 1–12 (MRHVQAETSPSS) and 129–141 (GGSSTSPWTSGAR). Disordered regions lie at residues 1–98 (MRHV…EPPT), 129–185 (GGSS…QLHT), and 201–303 (LVSG…PTDC). Residues 227–238 (HTPPGPGPPGPC) show a composition bias toward pro residues. Residues S254 and S255 each carry the phosphoserine modification. The required for macropage invasion stretch occupies residues 348–430 (LLGNFEESLL…VPKVGTIQVT (83 aa)). The segment at 436–444 (QTVVKMFLV) is transactivation domain 1 (TAD1).

The protein belongs to the ATOS family.

Its subcellular location is the nucleus. Functionally, transcription regulator that may syncronize transcriptional and translational programs. The protein is Atos homolog protein B of Bos taurus (Bovine).